Consider the following 520-residue polypeptide: Ribonuclease Y (520 aa).

Residues 5 to 25 (ITIISSLLFLIVGLVVGSLIF) traverse the membrane as a helical segment. The segment at 76–127 (ELRGRRTETQKAENRLLQREENLDRKDTSLSKREATLERKEESISKRQQQIE) is disordered. Positions 210–273 (TVSVVTLPND…EIARIALEKL (64 aa)) constitute a KH domain. Positions 336 to 429 (VLNHSLEVSK…VAAADALSAA (94 aa)) constitute an HD domain.

The protein belongs to the RNase Y family.

The protein resides in the cell membrane. Endoribonuclease that initiates mRNA decay. In Listeria monocytogenes serotype 1/2a (strain 10403S), this protein is Ribonuclease Y.